The sequence spans 247 residues: (7aS)-7a-methyl-1,5-dioxo-2,3,5,6,7,7a-hexahydro-1H-indene-carboxyl-CoA hydrolase (247 aa).

Belongs to the enoyl-CoA hydratase/isomerase family.

It carries out the reaction (7aS)-7a-methyl-1,5-dioxo-2,3,5,6,7,7a-hexahydro-1H-indene-carboxyl-CoA + H2O = (3E)-2-(2-carboxylatoethyl)-3-methyl-6-oxocyclohex-1-ene-1-carboxyl-CoA + H(+). It participates in steroid metabolism; cholesterol degradation. In terms of biological role, involved in the final steps of cholesterol and steroid degradation. Catalyzes the hydrolytic ring D opening of (7aS)-7a-methyl-1,5-dioxo-2,3,5,6,7,7a-hexahydro-1H-indene-carboxyl-CoA (HIEC-CoA) to (3E)-2-(2-carboxylatoethyl)-3-methyl-6-oxocyclohex-1-ene-1-carboxyl-CoA (COCHEA-CoA). In Mycobacterium tuberculosis (strain ATCC 25618 / H37Rv), this protein is (7aS)-7a-methyl-1,5-dioxo-2,3,5,6,7,7a-hexahydro-1H-indene-carboxyl-CoA hydrolase.